A 218-amino-acid polypeptide reads, in one-letter code: MGQKINPLGFRLGTTQSHRSFWFAQPKNYSKGLQEDEKIRDCIKNYVQKHMRISSGFEGIARIDIKKRIDLIQVIIHIGFANMLIEGRARGIEELQTNVQKSFHSVNRRLNIAIARVPRPYGQPNILAEYIALQLKNRVSFRKAMKKAIELAEQADAKGIQVQIAGRLNGNEIARVEWIREGRVPLQTIRVKIDHCSYPVRTIYGVLGIKIWIFLDEE.

Residues 47-118 (VQKHMRISSG…RLNIAIARVP (72 aa)) enclose the KH type-2 domain.

It belongs to the universal ribosomal protein uS3 family. As to quaternary structure, part of the 30S ribosomal subunit.

The protein localises to the plastid. It is found in the chloroplast. The protein is Small ribosomal subunit protein uS3c (rps3) of Nuphar advena (Common spatterdock).